Reading from the N-terminus, the 201-residue chain is GTP cyclohydrolase 1 (201 aa).

The Zn(2+) site is built by Cys90, His93, and Cys163.

Belongs to the GTP cyclohydrolase I family. Toroid-shaped homodecamer, composed of two pentamers of five dimers.

It catalyses the reaction GTP + H2O = 7,8-dihydroneopterin 3'-triphosphate + formate + H(+). Its pathway is cofactor biosynthesis; 7,8-dihydroneopterin triphosphate biosynthesis; 7,8-dihydroneopterin triphosphate from GTP: step 1/1. The chain is GTP cyclohydrolase 1 (folE) from Streptomyces coelicolor (strain ATCC BAA-471 / A3(2) / M145).